Consider the following 463-residue polypeptide: 23S rRNA (uracil(1939)-C(5))-methyltransferase RlmD (463 aa).

Residues 6–76 form the TRAM domain; that stretch reads KSRKPQQPEY…KRLEEAEMVA (71 aa). Residues Cys90, Cys96, Cys99, and Cys178 each coordinate [4Fe-4S] cluster. S-adenosyl-L-methionine-binding residues include Gln288, Phe317, Asn322, Glu341, Asp368, and Asp389. Cys415 serves as the catalytic Nucleophile.

This sequence belongs to the class I-like SAM-binding methyltransferase superfamily. RNA M5U methyltransferase family. RlmD subfamily.

The catalysed reaction is uridine(1939) in 23S rRNA + S-adenosyl-L-methionine = 5-methyluridine(1939) in 23S rRNA + S-adenosyl-L-homocysteine + H(+). Catalyzes the formation of 5-methyl-uridine at position 1939 (m5U1939) in 23S rRNA. In Acinetobacter baumannii (strain ACICU), this protein is 23S rRNA (uracil(1939)-C(5))-methyltransferase RlmD.